Consider the following 156-residue polypeptide: Small ribosomal subunit protein uS7 (156 aa).

It belongs to the universal ribosomal protein uS7 family. Part of the 30S ribosomal subunit. Contacts proteins S9 and S11.

In terms of biological role, one of the primary rRNA binding proteins, it binds directly to 16S rRNA where it nucleates assembly of the head domain of the 30S subunit. Is located at the subunit interface close to the decoding center, probably blocks exit of the E-site tRNA. The protein is Small ribosomal subunit protein uS7 of Leptothrix cholodnii (strain ATCC 51168 / LMG 8142 / SP-6) (Leptothrix discophora (strain SP-6)).